The chain runs to 178 residues: MTTGLPSQTQVIELLGGEFARAGYEIEDVVIDAHARPPRITVIADGDDGLDLDAAATLSRSASALLDKLDTIEDHYVLEVSSPGVDRPLRTPKHFRRARGRKVDVVLSDNSTVTGRVGETGDDTIALVVRAGRDWAIREIPLGDVVKAVVQVEFSPPAQAELELAGVGGTDKTEERRK.

This sequence belongs to the RimP family.

It localises to the cytoplasm. Required for maturation of 30S ribosomal subunits. The protein is Ribosome maturation factor RimP of Mycolicibacterium paratuberculosis (strain ATCC BAA-968 / K-10) (Mycobacterium paratuberculosis).